A 147-amino-acid polypeptide reads, in one-letter code: Peptide methionine sulfoxide reductase MsrB (147 aa).

Positions 8-131 (KEELKKILTE…NSASLKFIPK (124 aa)) constitute a MsrB domain. Cys120 serves as the catalytic Nucleophile.

It belongs to the MsrB Met sulfoxide reductase family.

It catalyses the reaction L-methionyl-[protein] + [thioredoxin]-disulfide + H2O = L-methionyl-(R)-S-oxide-[protein] + [thioredoxin]-dithiol. This chain is Peptide methionine sulfoxide reductase MsrB, found in Clostridium perfringens (strain SM101 / Type A).